The following is a 350-amino-acid chain: GTPase Obg (350 aa).

The region spanning 1–158 is the Obg domain; it reads MFIDSVKITL…RLVRLELKLI (158 aa). In terms of domain architecture, OBG-type G spans 159–339; the sequence is ADVGLVGFPN…LKFMLLEEIK (181 aa). Residues 165 to 172, 190 to 194, 212 to 215, 280 to 283, and 320 to 322 contribute to the GTP site; these read GFPNVGKS, FTTLT, DIPG, SKSD, and SSL. Mg(2+)-binding residues include S172 and T192.

It belongs to the TRAFAC class OBG-HflX-like GTPase superfamily. OBG GTPase family. As to quaternary structure, monomer. Mg(2+) is required as a cofactor.

The protein localises to the cytoplasm. Functionally, an essential GTPase which binds GTP, GDP and possibly (p)ppGpp with moderate affinity, with high nucleotide exchange rates and a fairly low GTP hydrolysis rate. Plays a role in control of the cell cycle, stress response, ribosome biogenesis and in those bacteria that undergo differentiation, in morphogenesis control. The protein is GTPase Obg of Campylobacter jejuni subsp. jejuni serotype O:2 (strain ATCC 700819 / NCTC 11168).